The following is a 404-amino-acid chain: Caspase-1 (404 aa).

One can recognise a CARD domain in the interval 1–91; sequence MADKVLKDKR…HLAQTLGLSS (91 aa). The propeptide occupies 1–119; that stretch reads MADKVLKDKR…SLPAFVENMP (119 aa). Active-site residues include H237 and C285. Positions 298-316 are excised as a propeptide; the sequence is SPKASTDSWTHQPLMLQSD. S302 carries the phosphoserine modification.

It belongs to the peptidase C14A family. Heterotetramer that consists of two anti-parallel arranged heterodimers, each one formed by a 20 kDa (Caspase-1 subunit p20) and a 10 kDa (Caspase-1 subunit p10) subunit. May be a component of the inflammasome, a protein complex which also includes PYCARD, CARD8 and NLRP2 and whose function would be the activation of pro-inflammatory caspases. Component of the AIM2 PANoptosome complex, a multiprotein complex that drives inflammatory cell death (PANoptosis). Both the p10 and p20 subunits interact with MEFV. Interacts with CARD17P/INCA and CARD18. Interacts with SERPINB1; this interaction regulates CASP1 activity. In terms of assembly, heterotetramer that consists of two anti-parallel arranged heterodimers, each one formed by a 20 kDa (Caspase-1 subunit p20) and a 10 kDa (Caspase-1 subunit p10) subunit. In terms of processing, the two subunits are derived from the precursor sequence by an autocatalytic mechanism. Post-translationally, ubiquitinated via 'Lys-11'-linked polyubiquitination. Deubiquitinated by USP8.

The protein localises to the cytoplasm. It is found in the cell membrane. It carries out the reaction Strict requirement for an Asp residue at position P1 and has a preferred cleavage sequence of Tyr-Val-Ala-Asp-|-.. In terms of biological role, thiol protease involved in a variety of inflammatory processes by proteolytically cleaving other proteins, such as the precursors of the inflammatory cytokines interleukin-1 beta (IL1B) and interleukin 18 (IL18) as well as the pyroptosis inducer Gasdermin-D (GSDMD), into active mature peptides. Plays a key role in cell immunity as an inflammatory response initiator: once activated through formation of an inflammasome complex, it initiates a pro-inflammatory response through the cleavage of the two inflammatory cytokines IL1B and IL18, releasing the mature cytokines which are involved in a variety of inflammatory processes. Cleaves a tetrapeptide after an Asp residue at position P1. Also initiates pyroptosis, a programmed lytic cell death pathway, through cleavage of GSDMD. In contrast to cleavage of interleukin IL1B, recognition and cleavage of GSDMD is not strictly dependent on the consensus cleavage site but depends on an exosite interface on CASP1 that recognizes and binds the Gasdermin-D, C-terminal (GSDMD-CT) part. Cleaves and activates CASP7 in response to bacterial infection, promoting plasma membrane repair. Upon inflammasome activation, during DNA virus infection but not RNA virus challenge, controls antiviral immunity through the cleavage of CGAS, rendering it inactive. In apoptotic cells, cleaves SPHK2 which is released from cells and remains enzymatically active extracellularly. The protein is Caspase-1 (CASP1) of Canis lupus familiaris (Dog).